Consider the following 128-residue polypeptide: Large ribosomal subunit protein bL19 (128 aa).

This sequence belongs to the bacterial ribosomal protein bL19 family.

This protein is located at the 30S-50S ribosomal subunit interface and may play a role in the structure and function of the aminoacyl-tRNA binding site. The protein is Large ribosomal subunit protein bL19 of Paraburkholderia xenovorans (strain LB400).